Consider the following 187-residue polypeptide: ATP synthase subunit b (187 aa).

Residues 31 to 51 traverse the membrane as a helical segment; it reads VAIMGLAIFVLFLILSYLLFN.

This sequence belongs to the ATPase B chain family. In terms of assembly, F-type ATPases have 2 components, F(1) - the catalytic core - and F(0) - the membrane proton channel. F(1) has five subunits: alpha(3), beta(3), gamma(1), delta(1), epsilon(1). F(0) has three main subunits: a(1), b(2) and c(10-14). The alpha and beta chains form an alternating ring which encloses part of the gamma chain. F(1) is attached to F(0) by a central stalk formed by the gamma and epsilon chains, while a peripheral stalk is formed by the delta and b chains.

Its subcellular location is the cell membrane. Functionally, f(1)F(0) ATP synthase produces ATP from ADP in the presence of a proton or sodium gradient. F-type ATPases consist of two structural domains, F(1) containing the extramembraneous catalytic core and F(0) containing the membrane proton channel, linked together by a central stalk and a peripheral stalk. During catalysis, ATP synthesis in the catalytic domain of F(1) is coupled via a rotary mechanism of the central stalk subunits to proton translocation. Its function is as follows. Component of the F(0) channel, it forms part of the peripheral stalk, linking F(1) to F(0). This is ATP synthase subunit b from Lachnoclostridium phytofermentans (strain ATCC 700394 / DSM 18823 / ISDg) (Clostridium phytofermentans).